The primary structure comprises 128 residues: MRHYETLFVLKPTLTDEESKAKFEFIKEVIQNNGGEIVATEDLGVRKLAYPIQKFERGHYYIIYFTAPSHTVLELERIYRITEDVIRFLTIKYETKKDISAWEKMVERAKKLSGQTNSEAKEEANENV.

It belongs to the bacterial ribosomal protein bS6 family.

Binds together with bS18 to 16S ribosomal RNA. The protein is Small ribosomal subunit protein bS6 of Nitratiruptor sp. (strain SB155-2).